The sequence spans 176 residues: Cytochrome b (176 aa).

Transmembrane regions (helical) follow at residues 33 to 53 (FGSLLGICLTIQILTGLFLAM), 77 to 98 (WLLRYLHANGASMFFICLYLHV), and 113 to 133 (WNMGIILLFAVMATAFMGYVL). Histidine 83 and histidine 97 together coordinate heme b.

Belongs to the cytochrome b family. As to quaternary structure, the cytochrome bc1 complex contains 11 subunits: 3 respiratory subunits (MT-CYB, CYC1 and UQCRFS1), 2 core proteins (UQCRC1 and UQCRC2) and 6 low-molecular weight proteins (UQCRH/QCR6, UQCRB/QCR7, UQCRQ/QCR8, UQCR10/QCR9, UQCR11/QCR10 and a cleavage product of UQCRFS1). This cytochrome bc1 complex then forms a dimer. Heme b serves as cofactor.

The protein localises to the mitochondrion inner membrane. Functionally, component of the ubiquinol-cytochrome c reductase complex (complex III or cytochrome b-c1 complex) that is part of the mitochondrial respiratory chain. The b-c1 complex mediates electron transfer from ubiquinol to cytochrome c. Contributes to the generation of a proton gradient across the mitochondrial membrane that is then used for ATP synthesis. This is Cytochrome b (MT-CYB) from Tomopeas ravum (Blunt-eared bat).